We begin with the raw amino-acid sequence, 423 residues long: AP-1 complex subunit mu-2 (423 aa).

The region spanning 168–421 is the MHD domain; it reads KNEVFIDVIE…ITQSGDYQLR (254 aa).

It belongs to the adaptor complexes medium subunit family. As to quaternary structure, adaptor protein complex 1 (AP-1) is a heterotetramer composed of two large adaptins (gamma-type subunit AP1G1 and beta-type subunit AP1B1), a medium adaptin (mu-type subunit AP1M1 or AP1M2) and a small adaptin (sigma-type subunit AP1S1 or AP1S2 or AP1S3). Interacts with P2X4. Phosphorylation of membrane-bound AP1M1/AP1M2 increases its affinity for sorting signals.

It is found in the golgi apparatus. It localises to the cytoplasmic vesicle. The protein localises to the clathrin-coated vesicle membrane. Its function is as follows. Subunit of clathrin-associated adaptor protein complex 1 that plays a role in protein sorting in the trans-Golgi network (TGN) and endosomes. The AP complexes mediate the recruitment of clathrin to membranes and the recognition of sorting signals within the cytosolic tails of transmembrane cargo molecules. This Mus musculus (Mouse) protein is AP-1 complex subunit mu-2 (Ap1m2).